The primary structure comprises 290 residues: Shikimate dehydrogenase (NADP(+)) (290 aa).

Shikimate is bound by residues 22–24 (SLS) and T68. Residue K72 is the Proton acceptor of the active site. Residue D84 coordinates NADP(+). The shikimate site is built by N93 and D108. Residues 133-137 (GSGGS) and I228 each bind NADP(+). Y230 provides a ligand contact to shikimate. G251 provides a ligand contact to NADP(+).

Belongs to the shikimate dehydrogenase family. In terms of assembly, homodimer.

The enzyme catalyses shikimate + NADP(+) = 3-dehydroshikimate + NADPH + H(+). The protein operates within metabolic intermediate biosynthesis; chorismate biosynthesis; chorismate from D-erythrose 4-phosphate and phosphoenolpyruvate: step 4/7. Functionally, involved in the biosynthesis of the chorismate, which leads to the biosynthesis of aromatic amino acids. Catalyzes the reversible NADPH linked reduction of 3-dehydroshikimate (DHSA) to yield shikimate (SA). The chain is Shikimate dehydrogenase (NADP(+)) from Leptospira interrogans serogroup Icterohaemorrhagiae serovar Lai (strain 56601).